A 38-amino-acid chain; its full sequence is Cytochrome b6-f complex subunit 5 (38 aa).

A helical membrane pass occupies residues 5–25 (LVLGIVLGLIPITLAGLFVAA).

This sequence belongs to the PetG family. The 4 large subunits of the cytochrome b6-f complex are cytochrome b6, subunit IV (17 kDa polypeptide, PetD), cytochrome f and the Rieske protein, while the 4 small subunits are PetG, PetL, PetM and PetN. The complex functions as a dimer.

The protein localises to the cellular thylakoid membrane. Functionally, component of the cytochrome b6-f complex, which mediates electron transfer between photosystem II (PSII) and photosystem I (PSI), cyclic electron flow around PSI, and state transitions. PetG is required for either the stability or assembly of the cytochrome b6-f complex. The polypeptide is Cytochrome b6-f complex subunit 5 (Microcystis aeruginosa (strain NIES-843 / IAM M-2473)).